Here is a 316-residue protein sequence, read N- to C-terminus: MNQLDALRQMTVVVADTGDIDAIKAYQPEDATTNPSLVLSASALPQYAPLIDEAIAYAKAKSNDKAQQLIDAEDKLAVNIGLEILKVVKGRISTEVDARYSYDTEKTIAKARKLIALYNEAGISNDRILIKIASTWQGIKAAEQLEKEGINCNLTLLFSQAQARACAEAGVYLISPFVGRILDWYKANSDKKEYAPAEDPGVVSVTSIYNYYKQHGYNTVVMGASFRNAGEITELAGCDRLTIAPALLKELQESEAPLVRKLEYKGEVKARPAPMTEAEFYWEHNQDPMAVEKLAEGIRKFAIDQEKLEAMLLAKF.

Lys131 (schiff-base intermediate with substrate) is an active-site residue.

Belongs to the transaldolase family. Type 1 subfamily. In terms of assembly, homodimer.

The protein localises to the cytoplasm. It catalyses the reaction D-sedoheptulose 7-phosphate + D-glyceraldehyde 3-phosphate = D-erythrose 4-phosphate + beta-D-fructose 6-phosphate. The protein operates within carbohydrate degradation; pentose phosphate pathway; D-glyceraldehyde 3-phosphate and beta-D-fructose 6-phosphate from D-ribose 5-phosphate and D-xylulose 5-phosphate (non-oxidative stage): step 2/3. Transaldolase is important for the balance of metabolites in the pentose-phosphate pathway. This Glaesserella parasuis serovar 5 (strain SH0165) (Haemophilus parasuis) protein is Transaldolase.